A 281-amino-acid chain; its full sequence is Pseudouridine-5'-phosphate glycosidase (281 aa).

Glu9 functions as the Proton donor in the catalytic mechanism. 2 residues coordinate substrate: Lys69 and Val89. Asp118 lines the Mn(2+) pocket. 120-122 (SAD) provides a ligand contact to substrate. Catalysis depends on Lys139, which acts as the Nucleophile.

Belongs to the pseudouridine-5'-phosphate glycosidase family. As to quaternary structure, homotrimer. Mn(2+) serves as cofactor.

It catalyses the reaction D-ribose 5-phosphate + uracil = psi-UMP + H2O. Its function is as follows. Catalyzes the reversible cleavage of pseudouridine 5'-phosphate (PsiMP) to ribose 5-phosphate and uracil. Functions biologically in the cleavage direction, as part of a pseudouridine degradation pathway. This chain is Pseudouridine-5'-phosphate glycosidase, found in Thermus thermophilus (strain ATCC BAA-163 / DSM 7039 / HB27).